The chain runs to 375 residues: UDP-N-acetylglucosamine--N-acetylmuramyl-(pentapeptide) pyrophosphoryl-undecaprenol N-acetylglucosamine transferase (375 aa).

Residues 13–15 (TGG), asparagine 124, arginine 165, serine 193, and glutamine 294 contribute to the UDP-N-acetyl-alpha-D-glucosamine site.

The protein belongs to the glycosyltransferase 28 family. MurG subfamily.

It localises to the cell inner membrane. The catalysed reaction is di-trans,octa-cis-undecaprenyl diphospho-N-acetyl-alpha-D-muramoyl-L-alanyl-D-glutamyl-meso-2,6-diaminopimeloyl-D-alanyl-D-alanine + UDP-N-acetyl-alpha-D-glucosamine = di-trans,octa-cis-undecaprenyl diphospho-[N-acetyl-alpha-D-glucosaminyl-(1-&gt;4)]-N-acetyl-alpha-D-muramoyl-L-alanyl-D-glutamyl-meso-2,6-diaminopimeloyl-D-alanyl-D-alanine + UDP + H(+). It functions in the pathway cell wall biogenesis; peptidoglycan biosynthesis. Cell wall formation. Catalyzes the transfer of a GlcNAc subunit on undecaprenyl-pyrophosphoryl-MurNAc-pentapeptide (lipid intermediate I) to form undecaprenyl-pyrophosphoryl-MurNAc-(pentapeptide)GlcNAc (lipid intermediate II). The chain is UDP-N-acetylglucosamine--N-acetylmuramyl-(pentapeptide) pyrophosphoryl-undecaprenol N-acetylglucosamine transferase from Chelativorans sp. (strain BNC1).